The primary structure comprises 372 residues: Mannan endo-1,4-beta-mannosidase 8 (372 aa).

Trp57 and Asn172 together coordinate substrate. Glu173 serves as the catalytic Proton donor. Tyr253 serves as a coordination point for substrate. Glu293 functions as the Nucleophile in the catalytic mechanism. Trp335 contacts substrate.

The protein belongs to the glycosyl hydrolase 5 (cellulase A) family. As to expression, expressed in stems and leaves and seeds.

It carries out the reaction Random hydrolysis of (1-&gt;4)-beta-D-mannosidic linkages in mannans, galactomannans and glucomannans.. The sequence is that of Mannan endo-1,4-beta-mannosidase 8 (MAN8) from Oryza sativa subsp. japonica (Rice).